A 185-amino-acid chain; its full sequence is Small ribosomal subunit protein uS4 (185 aa).

The region spanning 107 to 179 (RRLQTLVYRK…NGRRKRKNNH (73 aa)) is the S4 RNA-binding domain. The disordered stretch occupies residues 161-185 (NTPLTNPEINGRRKRKNNHAGKEDN).

It belongs to the universal ribosomal protein uS4 family.

The chain is Small ribosomal subunit protein uS4 from Entamoeba histolytica (strain ATCC 30459 / HM-1:IMSS / ABRM).